Reading from the N-terminus, the 120-residue chain is NAD(P)H-quinone oxidoreductase subunit 3, chloroplastic (120 aa).

3 consecutive transmembrane segments (helical) span residues 9-29 (IFWAFLIISSAIPVLAFLISG), 64-84 (MFALVFVVFDVETVFLYPWAM), and 88-108 (VLGVSAFIEALIFVLILILGL).

The protein belongs to the complex I subunit 3 family. In terms of assembly, NDH is composed of at least 16 different subunits, 5 of which are encoded in the nucleus.

It is found in the plastid. The protein resides in the chloroplast thylakoid membrane. The enzyme catalyses a plastoquinone + NADH + (n+1) H(+)(in) = a plastoquinol + NAD(+) + n H(+)(out). It carries out the reaction a plastoquinone + NADPH + (n+1) H(+)(in) = a plastoquinol + NADP(+) + n H(+)(out). NDH shuttles electrons from NAD(P)H:plastoquinone, via FMN and iron-sulfur (Fe-S) centers, to quinones in the photosynthetic chain and possibly in a chloroplast respiratory chain. The immediate electron acceptor for the enzyme in this species is believed to be plastoquinone. Couples the redox reaction to proton translocation, and thus conserves the redox energy in a proton gradient. The chain is NAD(P)H-quinone oxidoreductase subunit 3, chloroplastic from Olimarabidopsis pumila (Dwarf rocket).